Consider the following 728-residue polypeptide: 1,4-alpha-glucan branching enzyme GlgB (728 aa).

D405 functions as the Nucleophile in the catalytic mechanism. Catalysis depends on E458, which acts as the Proton donor.

This sequence belongs to the glycosyl hydrolase 13 family. GlgB subfamily. In terms of assembly, monomer.

It carries out the reaction Transfers a segment of a (1-&gt;4)-alpha-D-glucan chain to a primary hydroxy group in a similar glucan chain.. It participates in glycan biosynthesis; glycogen biosynthesis. Its function is as follows. Catalyzes the formation of the alpha-1,6-glucosidic linkages in glycogen by scission of a 1,4-alpha-linked oligosaccharide from growing alpha-1,4-glucan chains and the subsequent attachment of the oligosaccharide to the alpha-1,6 position. In Escherichia coli O6:H1 (strain CFT073 / ATCC 700928 / UPEC), this protein is 1,4-alpha-glucan branching enzyme GlgB.